The following is a 125-amino-acid chain: Small ribosomal subunit protein uS13 (125 aa).

The disordered stretch occupies residues 92–125; the sequence is RRSLPVRGQRTQTNARTRKGKRKTVAGKKKATKK. A compositionally biased stretch (basic residues) spans 107 to 125; that stretch reads RTRKGKRKTVAGKKKATKK.

The protein belongs to the universal ribosomal protein uS13 family. In terms of assembly, part of the 30S ribosomal subunit. Forms a loose heterodimer with protein S19. Forms two bridges to the 50S subunit in the 70S ribosome.

Functionally, located at the top of the head of the 30S subunit, it contacts several helices of the 16S rRNA. In the 70S ribosome it contacts the 23S rRNA (bridge B1a) and protein L5 of the 50S subunit (bridge B1b), connecting the 2 subunits; these bridges are implicated in subunit movement. Contacts the tRNAs in the A and P-sites. The sequence is that of Small ribosomal subunit protein uS13 from Chlorobium limicola (strain DSM 245 / NBRC 103803 / 6330).